The sequence spans 572 residues: Urease subunit alpha (572 aa).

The Urease domain occupies 132–572 (GGFDSHIHFI…LPMAQRYFMY (441 aa)). Ni(2+) contacts are provided by H137, H139, and K220. N6-carboxylysine is present on K220. Position 222 (H222) interacts with substrate. Ni(2+) contacts are provided by H249 and H275. Catalysis depends on H323, which acts as the Proton donor. A Ni(2+)-binding site is contributed by D363.

Belongs to the metallo-dependent hydrolases superfamily. Urease alpha subunit family. Heterotrimer of UreA (gamma), UreB (beta) and UreC (alpha) subunits. Three heterotrimers associate to form the active enzyme. The cofactor is Ni cation. Post-translationally, carboxylation allows a single lysine to coordinate two nickel ions.

Its subcellular location is the cytoplasm. The catalysed reaction is urea + 2 H2O + H(+) = hydrogencarbonate + 2 NH4(+). It functions in the pathway nitrogen metabolism; urea degradation; CO(2) and NH(3) from urea (urease route): step 1/1. This is Urease subunit alpha from Bradyrhizobium diazoefficiens (strain JCM 10833 / BCRC 13528 / IAM 13628 / NBRC 14792 / USDA 110).